The following is a 342-amino-acid chain: Zinc transporter ZIP11 (342 aa).

7 helical membrane passes run 12–32, 44–64, 72–92, 194–214, 263–285, 290–307, and 322–342; these read LLGTFFTWGMTAAGAALVFVF, LGFAAGVMLAASYWSLLAPAV, GFGAFAFFPVAVGFTLGAAFV, IALLILAITIHNVPEGLAVGV, FWYGQLSGMVEPLAGVFGAFAVV, ILPYALAFAAGAMVYVVM, and LASWASILGFVVMMSLDVGLG.

This sequence belongs to the ZIP transporter (TC 2.A.5) family.

It is found in the cell membrane. Its subcellular location is the nucleus. The protein resides in the cytoplasm. The protein localises to the golgi apparatus. The catalysed reaction is Zn(2+)(in) = Zn(2+)(out). It catalyses the reaction Cu(2+)(in) = Cu(2+)(out). Its function is as follows. Zinc importer that regulates cytosolic zinc concentrations either via zinc influx from the extracellular compartment or efflux from intracellular organelles such as Golgi apparatus. May transport copper ions as well. The transport mechanism remains to be elucidated. The sequence is that of Zinc transporter ZIP11 (SLC39A11) from Homo sapiens (Human).